The sequence spans 215 residues: Leucyl/phenylalanyl-tRNA--protein transferase (215 aa).

Belongs to the L/F-transferase family.

It is found in the cytoplasm. It carries out the reaction N-terminal L-lysyl-[protein] + L-leucyl-tRNA(Leu) = N-terminal L-leucyl-L-lysyl-[protein] + tRNA(Leu) + H(+). The enzyme catalyses N-terminal L-arginyl-[protein] + L-leucyl-tRNA(Leu) = N-terminal L-leucyl-L-arginyl-[protein] + tRNA(Leu) + H(+). The catalysed reaction is L-phenylalanyl-tRNA(Phe) + an N-terminal L-alpha-aminoacyl-[protein] = an N-terminal L-phenylalanyl-L-alpha-aminoacyl-[protein] + tRNA(Phe). Functions in the N-end rule pathway of protein degradation where it conjugates Leu, Phe and, less efficiently, Met from aminoacyl-tRNAs to the N-termini of proteins containing an N-terminal arginine or lysine. The sequence is that of Leucyl/phenylalanyl-tRNA--protein transferase from Campylobacter jejuni (strain RM1221).